The following is a 350-amino-acid chain: Flap endonuclease 1 (350 aa).

Residues 1–102 (MGVTELGKLI…IEIEKRRRVR (102 aa)) are N-domain. Asp-31, Asp-84, Glu-156, Glu-158, Asp-177, Asp-179, and Asp-241 together coordinate Mg(2+). The interval 120-263 (EARKYAQRAL…RALRLIQEYG (144 aa)) is I-domain.

This sequence belongs to the XPG/RAD2 endonuclease family. FEN1 subfamily. As to quaternary structure, interacts with PCNA. PCNA stimulates the nuclease activity without altering cleavage specificity. Mg(2+) is required as a cofactor.

Functionally, structure-specific nuclease with 5'-flap endonuclease and 5'-3' exonuclease activities involved in DNA replication and repair. During DNA replication, cleaves the 5'-overhanging flap structure that is generated by displacement synthesis when DNA polymerase encounters the 5'-end of a downstream Okazaki fragment. Binds the unpaired 3'-DNA end and kinks the DNA to facilitate 5' cleavage specificity. Cleaves one nucleotide into the double-stranded DNA from the junction in flap DNA, leaving a nick for ligation. Also involved in the base excision repair (BER) pathway. Acts as a genome stabilization factor that prevents flaps from equilibrating into structures that lead to duplications and deletions. Also possesses 5'-3' exonuclease activity on nicked or gapped double-stranded DNA. The sequence is that of Flap endonuclease 1 from Caldivirga maquilingensis (strain ATCC 700844 / DSM 13496 / JCM 10307 / IC-167).